The sequence spans 404 residues: Deoxyguanosinetriphosphate triphosphohydrolase-like protein (404 aa).

Residues 1–32 (MAVGMAAPHATYASDPARSRGRLFDEPPSKTR) form a disordered region. Residues 22-32 (RLFDEPPSKTR) are compositionally biased toward basic and acidic residues. The HD domain occupies 69-217 (RLTHTLEVAQ…AAIADDIAYD (149 aa)).

The protein belongs to the dGTPase family. Type 2 subfamily.

This Nitrobacter hamburgensis (strain DSM 10229 / NCIMB 13809 / X14) protein is Deoxyguanosinetriphosphate triphosphohydrolase-like protein.